A 268-amino-acid polypeptide reads, in one-letter code: Zinc transporter ZupT (268 aa).

8 helical membrane-spanning segments follow: residues 6 to 26, 37 to 57, 73 to 93, 126 to 146, 153 to 173, 189 to 209, 211 to 231, and 248 to 268; these read IIFAFSLTLFAGLATGVGGVI, FLAGSLGFSVGVMLFVSFVEI, GGNWAATGAFFAGIALIAVID, VLTAIAISIHNFPEGFATFVA, IAIPVAVAIAIHNIPEGIAVA, WATLSGLAEPAGAVVGFILLM, FLGPEAMGLSFAAVAGIMVFI, and TAIYGLVGGMAVMAVSLLLFI. Fe(2+) contacts are provided by asparagine 136 and glutamate 139. Zn(2+) is bound by residues glutamate 139 and histidine 164. Positions 165, 168, and 197 each coordinate Fe(2+). Glutamate 168 is a binding site for Zn(2+).

The protein belongs to the ZIP transporter (TC 2.A.5) family. ZupT subfamily.

Its subcellular location is the cell membrane. It catalyses the reaction Zn(2+)(in) = Zn(2+)(out). In terms of biological role, mediates zinc uptake. May also transport other divalent cations. This chain is Zinc transporter ZupT, found in Corynebacterium efficiens (strain DSM 44549 / YS-314 / AJ 12310 / JCM 11189 / NBRC 100395).